The chain runs to 123 residues: Histone H2B (123 aa).

The tract at residues 1–30 (MPPKTSGKAAKKAGKAQKNITKTDKKKKRK) is disordered. Pro-2 carries the post-translational modification N-methylproline; partial. An N6-succinyllysine modification is found at Lys-44. Ser-110 carries O-linked (GlcNAc) serine glycosylation. Residues Lys-114 and Lys-118 each carry the N6-succinyllysine modification. Lys-118 participates in a covalent cross-link: Glycyl lysine isopeptide (Lys-Gly) (interchain with G-Cter in ubiquitin).

The protein belongs to the histone H2B family. In terms of assembly, the nucleosome is a histone octamer containing two molecules each of H2A, H2B, H3 and H4 assembled in one H3-H4 heterotetramer and two H2A-H2B heterodimers. The octamer wraps approximately 147 bp of DNA. Post-translationally, phosphorylated by the catalytic component of the Dbf4-dependent kinase (DDK) complex Cdc7. Monoubiquitination of Lys-118 by Bre1 gives a specific tag for epigenetic transcriptional activation and is also prerequisite for histone H3 'Lys-4' and 'Lys-79' methylation. Deubiquitination of Lys-118 by the SAGA complex is involved in activating transcription of a large subset of genes. In terms of processing, methylation at Pro-2 increases upon heat shock. Post-translationally, glcNAcylation at Ser-110 promotes monoubiquitination of Lys-118. It fluctuates in response to extracellular glucose, and associates with transcribed genes.

Its subcellular location is the nucleus. It is found in the chromosome. Its function is as follows. Core component of nucleosome. Nucleosomes wrap and compact DNA into chromatin, limiting DNA accessibility to the cellular machineries which require DNA as a template. Histones thereby play a central role in transcription regulation, DNA repair, DNA replication and chromosomal stability. DNA accessibility is regulated via a complex set of post-translational modifications of histones, also called histone code, and nucleosome remodeling. This Drosophila erecta (Fruit fly) protein is Histone H2B (His2B).